The sequence spans 89 residues: MATSAAVKEEPATQFAKDQLKAIIERIERLEEEKKTISDDIRDVYAEAKGNGYDVKALRTIVRMRKQDANERAEQETILETYMQALGML.

The protein belongs to the UPF0335 family.

This Rhodopseudomonas palustris (strain BisB18) protein is UPF0335 protein RPC_3979.